The chain runs to 432 residues: MNFTKSEALHKEALEHIVGGVNSPSRSFKAVGGGSPVAMERGKGAYFWDVDGNKYIDYLAAYGPIITGHAHPHITKAITTAAENGVLYGTPTALEVKFAKMLKEAMPALDKVRFVNSGTESVMTTIRVARAYTGRTKIMKFAGCYHGHSDLVLVAAGSGPSTLGTPDSAGVPQSIAQEVITVPFNNVETLKEALDKWGHEVAAILVEPIVGNFGIVEPKPGFLEKVNELVHEAGALVIYDEVITAFRFMYGGAQDLLGVTPDLTALGKVIGGGLPIGAYGGKKEIMEQVAPLGPAYQAGTMAGNPASMASGIACLEVLQQKGVYEKLDELGAMLEKGILEQATKHNIDITVNRLKGALTVYFTTNTIEDYDAAKNTDGEMFGRFFKLMLQEGINLAPSKYEAWFLTTEHTKEDIEYTIEAVGRAFAALADNK.

Residue lysine 268 is modified to N6-(pyridoxal phosphate)lysine.

Belongs to the class-III pyridoxal-phosphate-dependent aminotransferase family. HemL subfamily. In terms of assembly, homodimer. Pyridoxal 5'-phosphate serves as cofactor.

It localises to the cytoplasm. It carries out the reaction (S)-4-amino-5-oxopentanoate = 5-aminolevulinate. Its pathway is porphyrin-containing compound metabolism; protoporphyrin-IX biosynthesis; 5-aminolevulinate from L-glutamyl-tRNA(Glu): step 2/2. This Bacillus mycoides (strain KBAB4) (Bacillus weihenstephanensis) protein is Glutamate-1-semialdehyde 2,1-aminomutase 1.